The following is a 126-amino-acid chain: Phosphoribosyl-AMP cyclohydrolase (126 aa).

Asp-77 provides a ligand contact to Mg(2+). Residue Cys-78 participates in Zn(2+) binding. Positions 79 and 81 each coordinate Mg(2+). Positions 95 and 102 each coordinate Zn(2+).

Belongs to the PRA-CH family. In terms of assembly, homodimer. Mg(2+) is required as a cofactor. It depends on Zn(2+) as a cofactor.

It is found in the cytoplasm. It catalyses the reaction 1-(5-phospho-beta-D-ribosyl)-5'-AMP + H2O = 1-(5-phospho-beta-D-ribosyl)-5-[(5-phospho-beta-D-ribosylamino)methylideneamino]imidazole-4-carboxamide. It functions in the pathway amino-acid biosynthesis; L-histidine biosynthesis; L-histidine from 5-phospho-alpha-D-ribose 1-diphosphate: step 3/9. In terms of biological role, catalyzes the hydrolysis of the adenine ring of phosphoribosyl-AMP. This chain is Phosphoribosyl-AMP cyclohydrolase, found in Cellvibrio japonicus (strain Ueda107) (Pseudomonas fluorescens subsp. cellulosa).